The primary structure comprises 305 residues: UDP-3-O-acyl-N-acetylglucosamine deacetylase (305 aa).

Histidine 79, histidine 238, and aspartate 242 together coordinate Zn(2+). Histidine 265 functions as the Proton donor in the catalytic mechanism.

The protein belongs to the LpxC family. Requires Zn(2+) as cofactor.

The catalysed reaction is a UDP-3-O-[(3R)-3-hydroxyacyl]-N-acetyl-alpha-D-glucosamine + H2O = a UDP-3-O-[(3R)-3-hydroxyacyl]-alpha-D-glucosamine + acetate. It functions in the pathway glycolipid biosynthesis; lipid IV(A) biosynthesis; lipid IV(A) from (3R)-3-hydroxytetradecanoyl-[acyl-carrier-protein] and UDP-N-acetyl-alpha-D-glucosamine: step 2/6. Catalyzes the hydrolysis of UDP-3-O-myristoyl-N-acetylglucosamine to form UDP-3-O-myristoylglucosamine and acetate, the committed step in lipid A biosynthesis. This Mannheimia succiniciproducens (strain KCTC 0769BP / MBEL55E) protein is UDP-3-O-acyl-N-acetylglucosamine deacetylase.